The sequence spans 215 residues: Glycerol-3-phosphate acyltransferase (215 aa).

6 helical membrane-spanning segments follow: residues 3 to 23 (LILLILTAYLLGSIPTGLWIG), 42 to 61 (TNTFRILGLKAGAATLLIDI), 68 to 90 (TLLPVLVGASNVSPIAIGFFAVL), 110 to 130 (AGVLLGFAPLYLLFLAAVFVL), 134 to 154 (LFSMISLASLTASVVAVISVL), and 162 to 182 (LLPGYDWLLTITIVVLAAIII).

The protein belongs to the PlsY family. As to quaternary structure, probably interacts with PlsX.

It localises to the cell membrane. It carries out the reaction an acyl phosphate + sn-glycerol 3-phosphate = a 1-acyl-sn-glycero-3-phosphate + phosphate. It functions in the pathway lipid metabolism; phospholipid metabolism. Its function is as follows. Catalyzes the transfer of an acyl group from acyl-phosphate (acyl-PO(4)) to glycerol-3-phosphate (G3P) to form lysophosphatidic acid (LPA). This enzyme utilizes acyl-phosphate as fatty acyl donor, but not acyl-CoA or acyl-ACP. This Streptococcus equi subsp. zooepidemicus (strain MGCS10565) protein is Glycerol-3-phosphate acyltransferase.